Here is an 837-residue protein sequence, read N- to C-terminus: GRIP1-associated protein 1 (837 aa).

At Ala2 the chain carries N-acetylalanine. A coiled-coil region spans residues 4 to 158; that stretch reads ALSEEEFQRM…ALQERYGKEA (155 aa). Disordered regions lie at residues 161-180, 555-577, 647-666, and 677-702; these read PSAV…PISL, KGKE…ERDG, SEMN…VSSF, and SSAI…LSDE. Positions 204-637 form a coiled coil; that stretch reads EQLQGLESSK…LQEILTNSKS (434 aa). The segment covering 648-666 has biased composition (polar residues); the sequence is EMNSPSRTQTGDSSSVSSF. 8 positions are modified to phosphoserine: Ser651, Ser662, Ser664, Ser665, Ser684, Ser686, Ser687, and Ser688. Positions 678–690 are enriched in low complexity; sequence SAIPARSLSSSPQ. 2 coiled-coil regions span residues 697-731 and 781-810; these read AELS…LEVS and DENL…KDME. At Ser826 the chain carries Phosphoserine.

Interacts with GRIP1, GRIP2 and AMPA receptors. Interacts (via C-terminus) with MAPK8/JNK1 and with MAP3K1/MEKK1; the interaction promotes MAP3K1-mediated phosphorylation of MAPK8. Interacts (via N-terminus) with RAB4A (in GTP-bound form). Interacts (via C-terminus) with STX12. Post-translationally, proteolytically cleaved by caspase-3. A minor C-terminal proteolytic fragment of 30 kDa is produced. Proteolytic cleavage is required for JNK signaling activation. Expressed in the central nervous system; especially in neurons.

The protein resides in the early endosome membrane. It is found in the recycling endosome membrane. Its subcellular location is the cell projection. It localises to the axon. The protein localises to the dendrite. The protein resides in the synapse. Its function is as follows. Regulates the endosomal recycling back to the neuronal plasma membrane, possibly by connecting early and late recycling endosomal domains and promoting segregation of recycling endosomes from early endosomal membranes. Involved in the localization of recycling endosomes to dendritic spines, thereby playing a role in the maintenance of dendritic spine morphology. Required for the activity-induced AMPA receptor recycling to dendrite membranes and for long-term potentiation and synaptic plasticity. Functionally, functions as a scaffold protein in neurons to facilitate MAP3K1/MEKK1-mediated activation of the JNK1 kinase by phosphorylation, possibly by bringing MAP3K1/MEKK1 and JNK1 in close proximity. The sequence is that of GRIP1-associated protein 1 (Gripap1) from Rattus norvegicus (Rat).